Here is a 754-residue protein sequence, read N- to C-terminus: NAD(P)H-quinone oxidoreductase subunit 5, chloroplastic (754 aa).

The next 16 membrane-spanning stretches (helical) occupy residues Phe-8–Leu-28, Trp-40–Ile-60, Val-89–Ile-109, Phe-125–Ile-145, Ile-147–Thr-167, Gly-185–Phe-205, Asn-219–Ala-239, Thr-258–Ala-278, Leu-280–Ile-300, Leu-327–Ile-347, Ala-354–Ser-374, Thr-396–Ser-416, Trp-425–Tyr-445, Phe-552–Phe-572, Phe-608–Phe-628, and Leu-733–Phe-753.

The protein belongs to the complex I subunit 5 family. In terms of assembly, NDH is composed of at least 16 different subunits, 5 of which are encoded in the nucleus.

It localises to the plastid. The protein resides in the chloroplast thylakoid membrane. It carries out the reaction a plastoquinone + NADH + (n+1) H(+)(in) = a plastoquinol + NAD(+) + n H(+)(out). It catalyses the reaction a plastoquinone + NADPH + (n+1) H(+)(in) = a plastoquinol + NADP(+) + n H(+)(out). Its function is as follows. NDH shuttles electrons from NAD(P)H:plastoquinone, via FMN and iron-sulfur (Fe-S) centers, to quinones in the photosynthetic chain and possibly in a chloroplast respiratory chain. The immediate electron acceptor for the enzyme in this species is believed to be plastoquinone. Couples the redox reaction to proton translocation, and thus conserves the redox energy in a proton gradient. This chain is NAD(P)H-quinone oxidoreductase subunit 5, chloroplastic (ndhF), found in Morus indica (Mulberry).